A 148-amino-acid chain; its full sequence is Arginine repressor (148 aa).

The protein belongs to the ArgR family.

It localises to the cytoplasm. It participates in amino-acid biosynthesis; L-arginine biosynthesis [regulation]. Its function is as follows. Regulates arginine biosynthesis genes. The polypeptide is Arginine repressor (Chlorobium limicola (strain DSM 245 / NBRC 103803 / 6330)).